Here is a 284-residue protein sequence, read N- to C-terminus: MTNKVVKIGDIPVANDLPFVLFGGMNVLESRDLAMRICEHYVTITQKLSIPYVFKASFDKANRSSIHSYRGPGLEEGMKIFQELKQTFGVKIITDVHEAHQAQPVADVVDVIQLPAFLARQTDLVEAMAKTGAVINVKKPQFVSPGQMGNIVDKFIEGGNDQVILCDRGSNFGYDNLVVDMLGFNVMKQVSKGSPVIFDVTHALQCRDPFGAASSGRRGQVTELARAGMAVGLAGLFIEAHPDPANAKCDGPSALPLDKLEPFLQQIKAIDDLVKNFPELDTSK.

The protein belongs to the KdsA family.

Its subcellular location is the cytoplasm. It carries out the reaction D-arabinose 5-phosphate + phosphoenolpyruvate + H2O = 3-deoxy-alpha-D-manno-2-octulosonate-8-phosphate + phosphate. The protein operates within carbohydrate biosynthesis; 3-deoxy-D-manno-octulosonate biosynthesis; 3-deoxy-D-manno-octulosonate from D-ribulose 5-phosphate: step 2/3. It functions in the pathway bacterial outer membrane biogenesis; lipopolysaccharide biosynthesis. In Pectobacterium carotovorum subsp. carotovorum (strain PC1), this protein is 2-dehydro-3-deoxyphosphooctonate aldolase.